The sequence spans 152 residues: 3-hydroxyacyl-[acyl-carrier-protein] dehydratase FabZ (152 aa).

Histidine 57 is a catalytic residue.

This sequence belongs to the thioester dehydratase family. FabZ subfamily.

The protein localises to the cytoplasm. The enzyme catalyses a (3R)-hydroxyacyl-[ACP] = a (2E)-enoyl-[ACP] + H2O. Functionally, involved in unsaturated fatty acids biosynthesis. Catalyzes the dehydration of short chain beta-hydroxyacyl-ACPs and long chain saturated and unsaturated beta-hydroxyacyl-ACPs. The sequence is that of 3-hydroxyacyl-[acyl-carrier-protein] dehydratase FabZ from Bradyrhizobium sp. (strain ORS 278).